The primary structure comprises 41 residues: Large ribosomal subunit protein bL36 (41 aa).

It belongs to the bacterial ribosomal protein bL36 family.

In Sphingopyxis alaskensis (strain DSM 13593 / LMG 18877 / RB2256) (Sphingomonas alaskensis), this protein is Large ribosomal subunit protein bL36.